The following is a 231-amino-acid chain: Cytochrome c oxidase subunit 2 (231 aa).

The Mitochondrial intermembrane portion of the chain corresponds to 1-14; it reads MATPAQLGLQNATS. A helical transmembrane segment spans residues 15–45; it reads PIMEELIAFHDHALMIIFLISSLVLYIISLM. Residues 46-59 lie on the Mitochondrial matrix side of the membrane; it reads LTTKLTHTSTMNAQ. The helical transmembrane segment at 60 to 87 threads the bilayer; that stretch reads EIEMIWTILPAIILIMIALPSLRILYMT. Residues 88-231 lie on the Mitochondrial intermembrane side of the membrane; sequence DEFNKPYLTL…WASYLYIVSL (144 aa). 6 residues coordinate Cu cation: H161, C196, E198, C200, H204, and M207. Position 198 (E198) interacts with Mg(2+).

This sequence belongs to the cytochrome c oxidase subunit 2 family. As to quaternary structure, component of the cytochrome c oxidase (complex IV, CIV), a multisubunit enzyme composed of 14 subunits. The complex is composed of a catalytic core of 3 subunits MT-CO1, MT-CO2 and MT-CO3, encoded in the mitochondrial DNA, and 11 supernumerary subunits COX4I, COX5A, COX5B, COX6A, COX6B, COX6C, COX7A, COX7B, COX7C, COX8 and NDUFA4, which are encoded in the nuclear genome. The complex exists as a monomer or a dimer and forms supercomplexes (SCs) in the inner mitochondrial membrane with NADH-ubiquinone oxidoreductase (complex I, CI) and ubiquinol-cytochrome c oxidoreductase (cytochrome b-c1 complex, complex III, CIII), resulting in different assemblies (supercomplex SCI(1)III(2)IV(1) and megacomplex MCI(2)III(2)IV(2)). Found in a complex with TMEM177, COA6, COX18, COX20, SCO1 and SCO2. Interacts with TMEM177 in a COX20-dependent manner. Interacts with COX20. Interacts with COX16. Requires Cu cation as cofactor.

It is found in the mitochondrion inner membrane. It catalyses the reaction 4 Fe(II)-[cytochrome c] + O2 + 8 H(+)(in) = 4 Fe(III)-[cytochrome c] + 2 H2O + 4 H(+)(out). Functionally, component of the cytochrome c oxidase, the last enzyme in the mitochondrial electron transport chain which drives oxidative phosphorylation. The respiratory chain contains 3 multisubunit complexes succinate dehydrogenase (complex II, CII), ubiquinol-cytochrome c oxidoreductase (cytochrome b-c1 complex, complex III, CIII) and cytochrome c oxidase (complex IV, CIV), that cooperate to transfer electrons derived from NADH and succinate to molecular oxygen, creating an electrochemical gradient over the inner membrane that drives transmembrane transport and the ATP synthase. Cytochrome c oxidase is the component of the respiratory chain that catalyzes the reduction of oxygen to water. Electrons originating from reduced cytochrome c in the intermembrane space (IMS) are transferred via the dinuclear copper A center (CU(A)) of subunit 2 and heme A of subunit 1 to the active site in subunit 1, a binuclear center (BNC) formed by heme A3 and copper B (CU(B)). The BNC reduces molecular oxygen to 2 water molecules using 4 electrons from cytochrome c in the IMS and 4 protons from the mitochondrial matrix. This chain is Cytochrome c oxidase subunit 2 (MT-CO2), found in Aotus nigriceps (Black-headed night monkey).